The following is a 152-amino-acid chain: Immunity protein YobK (152 aa).

As to quaternary structure, interacts with cognate toxin YobL but not with non-cognate putative toxin YeeF. The interaction inhibits the toxic activity of YobL.

Its subcellular location is the cytoplasm. Functionally, immunity component of one of 6 LXG toxin-immunity modules in this strain. They promote kin selection, mediate competition in biofilms, and drive spatial segregation of different strains, indicating that LXG toxins may help avoid warfare between strains in biofilms. Mediates intercellular competition during biofilm formation; disruption of the operon disadvantages the bacteria, but overexpression of the cognate immunity protein restores growth in competition with wild-type. In situ neutralizes the toxic effect of cognate toxin YobL. Neutralizes the toxic activity of cognate toxin YobL upon expression in E.coli. Does not have immunity protein activity on other LXG toxins. The protein is Immunity protein YobK (yobK) of Bacillus subtilis (strain 168).